Here is a 156-residue protein sequence, read N- to C-terminus: Lipoprotein signal peptidase (156 aa).

The next 3 helical transmembrane spans lie at 5-25, 64-84, and 89-109; these read FKFI…DQWV, YLHL…KTLL, and IAFG…FIYG. Residues Asp-113 and Asp-130 contribute to the active site. A helical membrane pass occupies residues 122 to 142; it reads NFAIFNVADVMINISVALILI.

It belongs to the peptidase A8 family.

The protein localises to the cell inner membrane. It catalyses the reaction Release of signal peptides from bacterial membrane prolipoproteins. Hydrolyzes -Xaa-Yaa-Zaa-|-(S,diacylglyceryl)Cys-, in which Xaa is hydrophobic (preferably Leu), and Yaa (Ala or Ser) and Zaa (Gly or Ala) have small, neutral side chains.. It participates in protein modification; lipoprotein biosynthesis (signal peptide cleavage). Functionally, this protein specifically catalyzes the removal of signal peptides from prolipoproteins. This chain is Lipoprotein signal peptidase, found in Campylobacter jejuni subsp. doylei (strain ATCC BAA-1458 / RM4099 / 269.97).